A 166-amino-acid polypeptide reads, in one-letter code: Regulatory protein RecX (166 aa).

The protein belongs to the RecX family.

Its subcellular location is the cytoplasm. Modulates RecA activity. This Shigella dysenteriae serotype 1 (strain Sd197) protein is Regulatory protein RecX.